Here is a 236-residue protein sequence, read N- to C-terminus: UPF0502 protein Bxeno_B1639 (236 aa).

It belongs to the UPF0502 family.

The sequence is that of UPF0502 protein Bxeno_B1639 from Paraburkholderia xenovorans (strain LB400).